A 186-amino-acid chain; its full sequence is piRNA-mediated silencing protein C19orf84 (186 aa).

2 disordered regions span residues 1–42 (MEQP…NSTD) and 89–186 (SQAG…ETEY). Residues 13–22 (NNLSLPSSGT) show a composition bias toward polar residues. A compositionally biased stretch (pro residues) spans 24 to 36 (PWPPAPLPAPPPL). Residues 114 to 126 (RPGWGRGLHRRGL) show a composition bias toward basic residues. Residues 145–157 (RTPPMTLPSPPTL) show a composition bias toward pro residues.

In terms of assembly, interacts with SPOCD1.

It is found in the nucleus. It localises to the nucleoplasm. Its function is as follows. Protein adapter involved in piRNA-directed transposon methylation by connecting PIWIL4-piRNA and DNA methylation machineries. The PIWIL4-piRNA pathway plays a central role during spermatogenesis by directing transposon DNA methylation and silencing, thereby preventing their mobilization, which is essential for the germline integrity. In Homo sapiens (Human), this protein is piRNA-mediated silencing protein C19orf84.